Consider the following 148-residue polypeptide: Transcriptional regulator MraZ (148 aa).

2 SpoVT-AbrB domains span residues 5–53 (ETAI…AEKE) and 82–125 (SAVL…SEQA).

It belongs to the MraZ family. In terms of assembly, forms oligomers.

The protein localises to the cytoplasm. It localises to the nucleoid. In Xanthomonas oryzae pv. oryzae (strain MAFF 311018), this protein is Transcriptional regulator MraZ.